The chain runs to 174 residues: Gamma-crystallin D (174 aa).

Beta/gamma crystallin 'Greek key' domains are found at residues 2-40 (GKIT…RVDS) and 41-83 (GCWM…RLIP). The tract at residues 84 to 87 (HAGS) is connecting peptide. 2 consecutive Beta/gamma crystallin 'Greek key' domains span residues 88–128 (HRLR…NVLE) and 129–171 (GSWV…RRVI).

The protein belongs to the beta/gamma-crystallin family.

In terms of biological role, crystallins are the dominant structural components of the vertebrate eye lens. The polypeptide is Gamma-crystallin D (CRYGD) (Bos taurus (Bovine)).